The following is a 511-amino-acid chain: GMP synthase [glutamine-hydrolyzing] (511 aa).

The Glutamine amidotransferase type-1 domain occupies 5 to 195 (AILVLDFGSQ…VFKICQAQIN (191 aa)). The active-site Nucleophile is the C82. Catalysis depends on residues H169 and E171. A GMPS ATP-PPase domain is found at 196–386 (WSLEGNLETI…LGIKKESLYR (191 aa)). ATP is bound at residue 223 to 229 (SGGTDSL).

As to quaternary structure, homodimer.

The enzyme catalyses XMP + L-glutamine + ATP + H2O = GMP + L-glutamate + AMP + diphosphate + 2 H(+). It participates in purine metabolism; GMP biosynthesis; GMP from XMP (L-Gln route): step 1/1. Catalyzes the synthesis of GMP from XMP. This chain is GMP synthase [glutamine-hydrolyzing] (guaA), found in Borreliella burgdorferi (strain ATCC 35210 / DSM 4680 / CIP 102532 / B31) (Borrelia burgdorferi).